We begin with the raw amino-acid sequence, 149 residues long: 1,4-dihydroxy-2-naphthoyl-CoA hydrolase (149 aa).

D19 is an active-site residue.

Belongs to the 4-hydroxybenzoyl-CoA thioesterase family. DHNA-CoA hydrolase subfamily.

It catalyses the reaction 1,4-dihydroxy-2-naphthoyl-CoA + H2O = 1,4-dihydroxy-2-naphthoate + CoA + H(+). It functions in the pathway cofactor biosynthesis; phylloquinone biosynthesis. Its pathway is quinol/quinone metabolism; 1,4-dihydroxy-2-naphthoate biosynthesis; 1,4-dihydroxy-2-naphthoate from chorismate: step 7/7. Functionally, catalyzes the hydrolysis of 1,4-dihydroxy-2-naphthoyl-CoA (DHNA-CoA) to 1,4-dihydroxy-2-naphthoate (DHNA), a reaction involved in phylloquinone (vitamin K1) biosynthesis. The sequence is that of 1,4-dihydroxy-2-naphthoyl-CoA hydrolase from Synechococcus sp. (strain CC9605).